Consider the following 444-residue polypeptide: Proline--tRNA ligase (444 aa).

It belongs to the class-II aminoacyl-tRNA synthetase family. ProS type 2 subfamily. Homodimer.

The protein localises to the cytoplasm. It catalyses the reaction tRNA(Pro) + L-proline + ATP = L-prolyl-tRNA(Pro) + AMP + diphosphate. In terms of biological role, catalyzes the attachment of proline to tRNA(Pro) in a two-step reaction: proline is first activated by ATP to form Pro-AMP and then transferred to the acceptor end of tRNA(Pro). This chain is Proline--tRNA ligase, found in Pelagibacter ubique (strain HTCC1062).